The sequence spans 266 residues: MGQKIHPTGFRLAVSRNWASRWYANNNNFAAMLQEDIGVREYLKKKLKNASVGRVVIERPAKNARITIFSSRPGVVIGKKGEDIELLKTELQRRMGVPVHVNIEEIRKPETDAQLIADSITQQLERRIMFRRAMKRAMQNAMRLGAQGIKIMSAGRLNGIEIARTEWYREGRVPLHTLRADIDYATSEAKTTYGIIGVKVWVYKGDTLGRNDAPVVEEVTEDKRPRRNARPGDRRPRRDGEGGAPGARRGGPRRGAGKPEDGKTGE.

A KH type-2 domain is found at 39-107 (VREYLKKKLK…PVHVNIEEIR (69 aa)). Residues 214-266 (PVVEEVTEDKRPRRNARPGDRRPRRDGEGGAPGARRGGPRRGAGKPEDGKTGE) are disordered. Composition is skewed to basic and acidic residues over residues 230 to 241 (RPGDRRPRRDGE) and 257 to 266 (GKPEDGKTGE).

It belongs to the universal ribosomal protein uS3 family. As to quaternary structure, part of the 30S ribosomal subunit. Forms a tight complex with proteins S10 and S14.

In terms of biological role, binds the lower part of the 30S subunit head. Binds mRNA in the 70S ribosome, positioning it for translation. The polypeptide is Small ribosomal subunit protein uS3 (Burkholderia mallei (strain NCTC 10247)).